The chain runs to 515 residues: MASMSSGDESLRLCMFDLRRGQTEGQELEKILFFYPADLDFSTQLSVIGLSEGLITFTRLFSPEAACEVIEAERHSHVFYEAEPDIWMVMVVEKNKETGAIWRIDALRRVLKEVHSLFVMFHGSIRALIEKEPTGGLTRSLLYPFITDYLSTFQIWSLSEDCCCEFFVGKKLQLPTFRETLRERGTVQMLTLARDTAVEVQSLVQVLDSCAGSLRCHSMILFQDLLVSTTLSADDTVDLFTFAVMRLTSKALSSDTSSWSYLRKGPGSSEISSRSNLAPVGSIDSLHSRNGNNMHHVIRPLQNDKWTKGKDGFLITDIWGLETGGSPDSAIPTIWLQQTQERMYLLAYQHKSLTLLLLMPTNAIVNGDLSISAVKQQVIEDASLRILKIEENISRGWGGENAYHIKGYRYLVVDNDTKVSRSSPSGKVTTLAKESLLALNKLREEVDSEKSRAKGQEKDMEICIRAKNNVWVIARVTRGKELYMALEKGSDTLLDTTDAVGRFSNRYCSGAFLMD.

This sequence belongs to the CCZ1 family. Interacts with MON1.

The protein resides in the endosome. It is found in the prevacuolar compartment. Plays an important role in membrane trafficking through the secretory apparatus. In complex with MON1, acts as a guanine exchange factor (GEF) for RABG3F of the Rab7 protein family. Promotes the exchange of GDP to GTP, converting RABG3F from an inactive GDP-bound form into an active GTP-bound form. The RABG3F active form is involved in protein trafficking from prevacuolar compartments (PVCs) to vacuoles. May serve as a linker between Rab5 and Rab7 protein families in PVCs and mediate PVC maturation. This Arabidopsis thaliana (Mouse-ear cress) protein is Vacuolar fusion protein CCZ1 homolog A.